The following is a 256-amino-acid chain: Diaminopimelate epimerase (256 aa).

Substrate contacts are provided by Asn-11 and Asn-63. The Proton donor role is filled by Cys-72. Substrate contacts are provided by residues 73-74, Asn-169, and 187-188; these read GN and ER. Cys-197 acts as the Proton acceptor in catalysis. 198-199 contacts substrate; that stretch reads GT.

It belongs to the diaminopimelate epimerase family. In terms of assembly, homodimer.

It is found in the cytoplasm. The enzyme catalyses (2S,6S)-2,6-diaminopimelate = meso-2,6-diaminopimelate. It participates in amino-acid biosynthesis; L-lysine biosynthesis via DAP pathway; DL-2,6-diaminopimelate from LL-2,6-diaminopimelate: step 1/1. Its function is as follows. Catalyzes the stereoinversion of LL-2,6-diaminopimelate (L,L-DAP) to meso-diaminopimelate (meso-DAP), a precursor of L-lysine and an essential component of the bacterial peptidoglycan. This chain is Diaminopimelate epimerase, found in Flavobacterium psychrophilum (strain ATCC 49511 / DSM 21280 / CIP 103535 / JIP02/86).